A 229-amino-acid polypeptide reads, in one-letter code: Orotidine 5'-phosphate decarboxylase (229 aa).

Residues D12, K34, 61-70 (DWKLHDIGAT), T116, R177, Q186, G206, and R207 each bind substrate. The active-site Proton donor is K63.

The protein belongs to the OMP decarboxylase family. Type 1 subfamily. Homodimer.

It carries out the reaction orotidine 5'-phosphate + H(+) = UMP + CO2. The protein operates within pyrimidine metabolism; UMP biosynthesis via de novo pathway; UMP from orotate: step 2/2. Its function is as follows. Catalyzes the decarboxylation of orotidine 5'-monophosphate (OMP) to uridine 5'-monophosphate (UMP). This is Orotidine 5'-phosphate decarboxylase from Caulobacter sp. (strain K31).